The sequence spans 674 residues: PTS system glucose-specific EIIBCA component (674 aa).

The 89-residue stretch at 1 to 89 (MASKLTTTSQ…LKLDGMKHFA (89 aa)) folds into the PTS EIIB type-1 domain. Cys28 (phosphocysteine intermediate; for EIIB activity) is an active-site residue. The PTS EIIC type-1 domain maps to 117 to 476 (EFLSDTFRPI…DAERDEAKAQ (360 aa)). 10 consecutive transmembrane segments (helical) span residues 126–146 (ILWA…ADTF), 162–182 (YVFL…MVGA), 193–213 (WIGA…LGSA), 225–245 (VLND…GLYW), 260–280 (MVFV…FLLG), 303–323 (FILS…GLHW), 344–364 (PMGA…LIAL), 376–396 (LGGM…YGVL), 409–429 (GCLV…AFVF), and 442–462 (LGYT…VLFF). The PTS EIIA type-1 domain maps to 542-646 (DPIFAAGKLG…PLITPVVVSN (105 aa)). His594 serves as the catalytic Tele-phosphohistidine intermediate; for EIIA activity.

Its subcellular location is the cell membrane. It catalyses the reaction N(pros)-phospho-L-histidyl-[protein] + D-glucose(out) = D-glucose 6-phosphate(in) + L-histidyl-[protein]. Functionally, the phosphoenolpyruvate-dependent sugar phosphotransferase system (sugar PTS), a major carbohydrate active transport system, catalyzes the phosphorylation of incoming sugar substrates concomitantly with their translocation across the cell membrane. This system is involved in glucose transport. This is PTS system glucose-specific EIIBCA component (ptsG) from Corynebacterium glutamicum (Brevibacterium saccharolyticum).